The primary structure comprises 370 residues: F-box/kelch-repeat protein At4g38940 (370 aa).

The 47-residue stretch at 18–64 folds into the F-box domain; sequence PCLISLLPEEIVVDIVARVPRCYYPTLSQVSRRFRSLVASPEIYKRR. Kelch repeat units lie at residues 131–177, 178–230, and 263–315; these read NIFV…LIDR, KIYV…VIGG, and SACV…SYTG.

In terms of assembly, part of a SCF (ASK-cullin-F-box) protein ligase complex. Interacts with SKP1A/ASK1, SKP1B/ASK2, ASK11, ASK13 and ASK18.

It is found in the nucleus. It functions in the pathway protein modification; protein ubiquitination. Component of SCF(ASK-cullin-F-box) E3 ubiquitin ligase complexes, which may mediate the ubiquitination and subsequent proteasomal degradation of target proteins. The polypeptide is F-box/kelch-repeat protein At4g38940 (Arabidopsis thaliana (Mouse-ear cress)).